A 377-amino-acid polypeptide reads, in one-letter code: MNVPEPTLDDLPLRDNLRGKSPYGAMQLLVPVLLNTNENPHPPTKALVDDVVRSVQKVAVDLHRYPDRDAVALRQDLASYLTAQTGIRLGVENIWAANGSNEILQQLLQAFGGPGRSAIGFVPSYSMHPIIADGTHTEWLETVRADDFSLDVEAAVTAVADRKPDVVFIASPNNPSGQSISLADLRRLLDVVPGILIVDEAYGEFSSRPSAVALVGEYPTKIVVTRTTSKAFAFAGGRLGYLIATPALVEAMLLVRLPYHLSSVTQAAARAALRHADDTLGSVAALIAERERVTKSLVHMGFRVIPSDANFVLFGHFSDAAGAWQHYLDTGVLIRDVGIPGYLRATTGLAEENDAFLKASSEIAATELAPATTLGAS.

Lys230 carries the post-translational modification N6-(pyridoxal phosphate)lysine.

Belongs to the class-II pyridoxal-phosphate-dependent aminotransferase family. Histidinol-phosphate aminotransferase subfamily. As to quaternary structure, homodimer. Requires pyridoxal 5'-phosphate as cofactor.

It catalyses the reaction L-histidinol phosphate + 2-oxoglutarate = 3-(imidazol-4-yl)-2-oxopropyl phosphate + L-glutamate. Its pathway is amino-acid biosynthesis; L-histidine biosynthesis; L-histidine from 5-phospho-alpha-D-ribose 1-diphosphate: step 7/9. The chain is Histidinol-phosphate aminotransferase from Mycobacterium leprae (strain Br4923).